A 329-amino-acid chain; its full sequence is Beta-ketoacyl-[acyl-carrier-protein] synthase III (329 aa).

Active-site residues include C123 and H256. The ACP-binding stretch occupies residues 257-261 (QANIR). Residue N286 is part of the active site.

The protein belongs to the thiolase-like superfamily. FabH family. Homodimer.

It localises to the cytoplasm. It carries out the reaction malonyl-[ACP] + acetyl-CoA + H(+) = 3-oxobutanoyl-[ACP] + CO2 + CoA. It participates in lipid metabolism; fatty acid biosynthesis. In terms of biological role, catalyzes the condensation reaction of fatty acid synthesis by the addition to an acyl acceptor of two carbons from malonyl-ACP. Catalyzes the first condensation reaction which initiates fatty acid synthesis and may therefore play a role in governing the total rate of fatty acid production. Possesses both acetoacetyl-ACP synthase and acetyl transacylase activities. Its substrate specificity determines the biosynthesis of branched-chain and/or straight-chain of fatty acids. In Burkholderia pseudomallei (strain 1710b), this protein is Beta-ketoacyl-[acyl-carrier-protein] synthase III.